The sequence spans 843 residues: KN motif and ankyrin repeat domain-containing protein 2 (843 aa).

The disordered stretch occupies residues 1–31 (MAQVLHVPAPFPGTPGQASPAAFPSKEPDPP). The tract at residues 1 to 72 (MAQVLHVPAP…AVQRRPRLGS (72 aa)) is interaction with AIFM1. A phosphoserine mark is found at serine 19, serine 83, serine 86, serine 89, and serine 92. The residue at position 105 (arginine 105) is an Omega-N-methylarginine. A disordered region spans residues 161-182 (LAGVGLLPPTPRSSGLSTPVAP). Threonine 170 carries the phosphothreonine modification. 2 coiled-coil regions span residues 183–234 (SAGH…QLKS) and 282–313 (DGEAALVAKVAVLETQLKKALQELRAAQTQQV). Threonine 331 carries the phosphothreonine modification. Residue serine 358 is modified to Phosphoserine. Residues 410 to 577 (TERSCTGAPR…VASGPDPEEE (168 aa)) are disordered. Over residues 457-470 (AAASQDSQAADGAG) the composition is skewed to low complexity. At serine 532 the chain carries Phosphoserine. Residues 547–561 (ATTSLEGPQLSQESQ) show a composition bias toward polar residues. An ANK 0; degenerate repeat occupies 606-643 (RELKVAYTTVLQEWLRLACRSDAHPELVRRHLVTFRAM). An interaction with NCOA1 region spans residues 661–827 (TALHYSVSHA…YSRMNIKCSF (167 aa)). 5 ANK repeats span residues 673-703 (PVVRQLLDSGVCHVDKLNRAGYSPIMLTALA), 707-740 (TQDDIETILQLFRLGNVNAKASQAGQTALMLAVS), 745-774 (DVVRALLACEADVNIQDEDGSTALMCACEH), 778-808 (EITGLLLAVPSCDISLTDRDGSTALMVALDA), and 812-842 (EIASMLYSRMNIKCSFAPMSDYESPASSSAE).

In terms of assembly, interacts (non-phosphorylated form) with NCOA1; NCOA2 AND NCOA3. Interacts with AIFM1. Interacts with ARHGDIA; the interaction is direct and may regulate the interaction of ARHGDIA with RHOA, RAC1 and CDC42. Interacts (via ANK repeats 1-5) with KIF21A (via residues 1148-1169). Phosphorylated by casein kinase II upon estrogen stimulation. Phosphorylation induces the release by KANK2 of NCOA1 and its translocation to the nucleus where NCOA1 can activate gene transcription. Widely expressed with highest levels in liver and skeletal muscle.

The protein resides in the cytoplasm. It is found in the mitochondrion. Functionally, involved in transcription regulation by sequestering in the cytoplasm nuclear receptor coactivators such as NCOA1, NCOA2 and NCOA3. Involved in regulation of caspase-independent apoptosis by sequestering the proapoptotic factor AIFM1 in mitochondria. Pro-apoptotic stimuli can induce its proteasomal degradation allowing the translocation of AIFM1 to the nucleus to induce apoptosis. Involved in the negative control of vitamin D receptor signaling pathway. Involved in actin stress fibers formation through its interaction with ARHGDIA and the regulation of the Rho signaling pathway. May thereby play a role in cell adhesion and migration, regulating for instance podocytes migration during development of the kidney. Through the Rho signaling pathway may also regulate cell proliferation. This is KN motif and ankyrin repeat domain-containing protein 2 (Kank2) from Mus musculus (Mouse).